Here is a 196-residue protein sequence, read N- to C-terminus: UMP-CMP kinase (196 aa).

13–18 (GAGKGT) lines the ATP pocket. Residues 33–63 (SAGDLLRDERKRPGSQYGELIENYIKEGEIV) form an NMP region. A ribonucleoside 5'-phosphate is bound by residues arginine 39, 61–63 (EIV), and 93–96 (GFPR). Asparagine 100 lines the CMP pocket. The LID stretch occupies residues 133-143 (ERGKSSGRSDD). Residue arginine 134 participates in ATP binding. Positions 140 and 151 each coordinate a ribonucleoside 5'-phosphate. Residue lysine 179 coordinates ATP.

It belongs to the adenylate kinase family. UMP-CMP kinase subfamily. Monomer. Mg(2+) serves as cofactor.

Its subcellular location is the nucleus. It is found in the cytoplasm. It carries out the reaction CMP + ATP = CDP + ADP. The catalysed reaction is dCMP + ATP = dCDP + ADP. It catalyses the reaction UMP + ATP = UDP + ADP. The enzyme catalyses a 2'-deoxyribonucleoside 5'-diphosphate + ATP = a 2'-deoxyribonucleoside 5'-triphosphate + ADP. It carries out the reaction a ribonucleoside 5'-diphosphate + ATP = a ribonucleoside 5'-triphosphate + ADP. Functionally, catalyzes the phosphorylation of pyrimidine nucleoside monophosphates at the expense of ATP. Plays an important role in de novo pyrimidine nucleotide biosynthesis. Has preference for UMP and CMP as phosphate acceptors. Also displays broad nucleoside diphosphate kinase activity. The chain is UMP-CMP kinase (CMPK) from Gallus gallus (Chicken).